We begin with the raw amino-acid sequence, 621 residues long: Glutamyl-tRNA(Gln) amidotransferase subunit B, mitochondrial (621 aa).

Residues 1-41 (MARLPTTELRKYLLTGQFTRRGCLHLRPSPLAPPIPPLRTL) constitute a mitochondrion transit peptide. Disordered regions lie at residues 26–86 (LRPS…DNQT) and 106–136 (SKLF…APFD). 2 stretches are compositionally biased toward low complexity: residues 38 to 57 (LRTL…QIIP) and 110 to 120 (SPASTPSSSSD).

Belongs to the GatB/GatE family. GatB subfamily. As to quaternary structure, subunit of the heterotrimeric GatCAB amidotransferase (AdT) complex, composed of A, B and C subunits.

It localises to the mitochondrion. It catalyses the reaction L-glutamyl-tRNA(Gln) + L-glutamine + ATP + H2O = L-glutaminyl-tRNA(Gln) + L-glutamate + ADP + phosphate + H(+). In terms of biological role, allows the formation of correctly charged Gln-tRNA(Gln) through the transamidation of misacylated Glu-tRNA(Gln) in the mitochondria. The reaction takes place in the presence of glutamine and ATP through an activated gamma-phospho-Glu-tRNA(Gln). The chain is Glutamyl-tRNA(Gln) amidotransferase subunit B, mitochondrial from Podospora anserina (strain S / ATCC MYA-4624 / DSM 980 / FGSC 10383) (Pleurage anserina).